Reading from the N-terminus, the 370-residue chain is Quinolinate synthase (370 aa).

Histidine 62 and serine 83 together coordinate iminosuccinate. Cysteine 128 is a binding site for [4Fe-4S] cluster. Iminosuccinate is bound by residues 154 to 156 and serine 171; that span reads YAN. Cysteine 215 provides a ligand contact to [4Fe-4S] cluster. Iminosuccinate is bound by residues 241 to 243 and threonine 258; that span reads HPE. [4Fe-4S] cluster is bound at residue cysteine 312.

The protein belongs to the quinolinate synthase family. Type 1 subfamily. It depends on [4Fe-4S] cluster as a cofactor.

The protein localises to the cytoplasm. The enzyme catalyses iminosuccinate + dihydroxyacetone phosphate = quinolinate + phosphate + 2 H2O + H(+). Its pathway is cofactor biosynthesis; NAD(+) biosynthesis; quinolinate from iminoaspartate: step 1/1. In terms of biological role, catalyzes the condensation of iminoaspartate with dihydroxyacetone phosphate to form quinolinate. The protein is Quinolinate synthase of Neisseria meningitidis serogroup B (strain ATCC BAA-335 / MC58).